A 438-amino-acid chain; its full sequence is Glutamyl-tRNA reductase (438 aa).

Substrate contacts are provided by residues 49–52 (TCNR), S109, 114–116 (EQQ), and Q120. The active-site Nucleophile is C50. 191 to 196 (GAGAMA) serves as a coordination point for NADP(+).

It belongs to the glutamyl-tRNA reductase family. In terms of assembly, homodimer.

The enzyme catalyses (S)-4-amino-5-oxopentanoate + tRNA(Glu) + NADP(+) = L-glutamyl-tRNA(Glu) + NADPH + H(+). The protein operates within porphyrin-containing compound metabolism; protoporphyrin-IX biosynthesis; 5-aminolevulinate from L-glutamyl-tRNA(Glu): step 1/2. Functionally, catalyzes the NADPH-dependent reduction of glutamyl-tRNA(Glu) to glutamate 1-semialdehyde (GSA). The sequence is that of Glutamyl-tRNA reductase from Corynebacterium diphtheriae (strain ATCC 700971 / NCTC 13129 / Biotype gravis).